A 55-amino-acid polypeptide reads, in one-letter code: Large ribosomal subunit protein bL33 (55 aa).

This sequence belongs to the bacterial ribosomal protein bL33 family.

The protein is Large ribosomal subunit protein bL33 of Rhodopseudomonas palustris (strain HaA2).